Here is a 317-residue protein sequence, read N- to C-terminus: Phospho-N-acetylmuramoyl-pentapeptide-transferase (317 aa).

A run of 9 helical transmembrane segments spans residues 4 to 24 (LIYS…ILIP), 49 to 69 (TPTM…AVIV), 76 to 96 (AMIA…DDTL), 112 to 132 (MILL…NPYI), 147 to 167 (LGVF…NAVN), 186 to 206 (FLAL…CAIL), 223 to 243 (IFMG…VAMI), 246 to 266 (LPLL…SVIF), and 297 to 317 (RVVS…FLSL).

It belongs to the glycosyltransferase 4 family. MraY subfamily. Mg(2+) serves as cofactor.

It localises to the cell membrane. It catalyses the reaction UDP-N-acetyl-alpha-D-muramoyl-L-alanyl-gamma-D-glutamyl-meso-2,6-diaminopimeloyl-D-alanyl-D-alanine + di-trans,octa-cis-undecaprenyl phosphate = di-trans,octa-cis-undecaprenyl diphospho-N-acetyl-alpha-D-muramoyl-L-alanyl-D-glutamyl-meso-2,6-diaminopimeloyl-D-alanyl-D-alanine + UMP. It participates in cell wall biogenesis; peptidoglycan biosynthesis. In terms of biological role, catalyzes the initial step of the lipid cycle reactions in the biosynthesis of the cell wall peptidoglycan: transfers peptidoglycan precursor phospho-MurNAc-pentapeptide from UDP-MurNAc-pentapeptide onto the lipid carrier undecaprenyl phosphate, yielding undecaprenyl-pyrophosphoryl-MurNAc-pentapeptide, known as lipid I. This is Phospho-N-acetylmuramoyl-pentapeptide-transferase from Clostridium kluyveri (strain NBRC 12016).